The sequence spans 326 residues: Tetraketide alpha-pyrone reductase 1 (326 aa).

Residues 8–32 (VCVTGASGFLASWLVKRLLLEGYEV), K44, and Y162 contribute to the NADP(+) site.

This sequence belongs to the NAD(P)-dependent epimerase/dehydratase family. Dihydroflavonol-4-reductase subfamily. In terms of assembly, interacts with 4CLL1/ACOS5, PKSA and PKSB. Specifically expressed in anther tapetal cells during microspores development.

The protein resides in the cytoplasm. It localises to the nucleus. Its subcellular location is the endoplasmic reticulum. Its function is as follows. Involved in the biosynthesis of hydroxylated tetraketide compounds that serve as sporopollenin precursors (the main constituents of exine). Is essential for pollen wall development. Acts on tetraketide alpha-pyrones and reduces the carbonyl function on the tetraketide alkyl chain to a secondary alcohol function. In Arabidopsis thaliana (Mouse-ear cress), this protein is Tetraketide alpha-pyrone reductase 1 (TKPR1).